Here is a 249-residue protein sequence, read N- to C-terminus: MNKKNQWIVGINAVVSSIENDAEHVCEVLVEAGSKNSRLLDIEENARRKGIEVRRVTTQALDGVGGGVRHQGVAARYAAVRLWEEHDLKDLVDAAGGQALLLVLDGVQDPHNLGACLRSAAAAGVTAVIIPKDKSVGINATVRKTSSGAADRLPVIAVVNLARSLRELQKQDVWIYGLEGEAETSLYALDLRGKVALVLGGEADGLRRLTREHCDVLARIPMPGEVESLNVSVAAGVTLFEAVRQRTLV.

3 residues coordinate S-adenosyl-L-methionine: Gly-200, Ile-220, and Leu-229.

This sequence belongs to the class IV-like SAM-binding methyltransferase superfamily. RNA methyltransferase TrmH family. RlmB subfamily.

It is found in the cytoplasm. It carries out the reaction guanosine(2251) in 23S rRNA + S-adenosyl-L-methionine = 2'-O-methylguanosine(2251) in 23S rRNA + S-adenosyl-L-homocysteine + H(+). Specifically methylates the ribose of guanosine 2251 in 23S rRNA. This Xylella fastidiosa (strain 9a5c) protein is 23S rRNA (guanosine-2'-O-)-methyltransferase RlmB.